A 544-amino-acid polypeptide reads, in one-letter code: Chaperonin GroEL 2 (544 aa).

Residues 29–32, 86–90, glycine 413, 479–481, and aspartate 495 contribute to the ATP site; these read TLGP, DGTTT, and NAA.

The protein belongs to the chaperonin (HSP60) family. As to quaternary structure, forms a cylinder of 14 subunits composed of two heptameric rings stacked back-to-back. Interacts with the co-chaperonin GroES.

The protein localises to the cytoplasm. It catalyses the reaction ATP + H2O + a folded polypeptide = ADP + phosphate + an unfolded polypeptide.. Functionally, together with its co-chaperonin GroES, plays an essential role in assisting protein folding. The GroEL-GroES system forms a nano-cage that allows encapsulation of the non-native substrate proteins and provides a physical environment optimized to promote and accelerate protein folding. The chain is Chaperonin GroEL 2 from Prochlorococcus marinus (strain MIT 9515).